The chain runs to 479 residues: Probable glycine dehydrogenase (decarboxylating) subunit 2 (479 aa).

Lys265 is modified (N6-(pyridoxal phosphate)lysine).

Belongs to the GcvP family. C-terminal subunit subfamily. As to quaternary structure, the glycine cleavage system is composed of four proteins: P, T, L and H. In this organism, the P 'protein' is a heterodimer of two subunits. It depends on pyridoxal 5'-phosphate as a cofactor.

The catalysed reaction is N(6)-[(R)-lipoyl]-L-lysyl-[glycine-cleavage complex H protein] + glycine + H(+) = N(6)-[(R)-S(8)-aminomethyldihydrolipoyl]-L-lysyl-[glycine-cleavage complex H protein] + CO2. Functionally, the glycine cleavage system catalyzes the degradation of glycine. The P protein binds the alpha-amino group of glycine through its pyridoxal phosphate cofactor; CO(2) is released and the remaining methylamine moiety is then transferred to the lipoamide cofactor of the H protein. This Pseudothermotoga lettingae (strain ATCC BAA-301 / DSM 14385 / NBRC 107922 / TMO) (Thermotoga lettingae) protein is Probable glycine dehydrogenase (decarboxylating) subunit 2.